Here is a 204-residue protein sequence, read N- to C-terminus: Large ribosomal subunit protein eL15B (204 aa).

The tract at residues 165–185 is disordered; the sequence is TATGKKSRGINKGHKFNNTKA. Residues 169 to 185 are compositionally biased toward basic residues; that stretch reads KKSRGINKGHKFNNTKA.

It belongs to the eukaryotic ribosomal protein eL15 family. In terms of assembly, component of the large ribosomal subunit (LSU). Mature yeast ribosomes consist of a small (40S) and a large (60S) subunit. The 40S small subunit contains 1 molecule of ribosomal RNA (18S rRNA) and 33 different proteins (encoded by 57 genes). The large 60S subunit contains 3 rRNA molecules (25S, 5.8S and 5S rRNA) and 46 different proteins (encoded by 81 genes).

The protein localises to the cytoplasm. Component of the ribosome, a large ribonucleoprotein complex responsible for the synthesis of proteins in the cell. The small ribosomal subunit (SSU) binds messenger RNAs (mRNAs) and translates the encoded message by selecting cognate aminoacyl-transfer RNA (tRNA) molecules. The large subunit (LSU) contains the ribosomal catalytic site termed the peptidyl transferase center (PTC), which catalyzes the formation of peptide bonds, thereby polymerizing the amino acids delivered by tRNAs into a polypeptide chain. The nascent polypeptides leave the ribosome through a tunnel in the LSU and interact with protein factors that function in enzymatic processing, targeting, and the membrane insertion of nascent chains at the exit of the ribosomal tunnel. The sequence is that of Large ribosomal subunit protein eL15B from Saccharomyces cerevisiae (strain ATCC 204508 / S288c) (Baker's yeast).